A 513-amino-acid chain; its full sequence is ATP synthase subunit alpha (513 aa).

169 to 176 (GDRQTGKT) serves as a coordination point for ATP.

This sequence belongs to the ATPase alpha/beta chains family. As to quaternary structure, F-type ATPases have 2 components, CF(1) - the catalytic core - and CF(0) - the membrane proton channel. CF(1) has five subunits: alpha(3), beta(3), gamma(1), delta(1), epsilon(1). CF(0) has three main subunits: a(1), b(2) and c(9-12). The alpha and beta chains form an alternating ring which encloses part of the gamma chain. CF(1) is attached to CF(0) by a central stalk formed by the gamma and epsilon chains, while a peripheral stalk is formed by the delta and b chains.

The protein localises to the cell inner membrane. The enzyme catalyses ATP + H2O + 4 H(+)(in) = ADP + phosphate + 5 H(+)(out). Produces ATP from ADP in the presence of a proton gradient across the membrane. The alpha chain is a regulatory subunit. The chain is ATP synthase subunit alpha from Salmonella arizonae (strain ATCC BAA-731 / CDC346-86 / RSK2980).